The chain runs to 299 residues: MKHISVLLNESIEGLNIKPNGIYVDATLGGGGHSLEILKKLDKGHLYAFDQDAYAIGRATERLKDFSNKTFIQSNFSFIKEKLNELGIYQVDGIIFDLGLSSFQIDDETRGFSYLKDYDLDMRMNKDATLTAKEIVNTYERQKLADIFRAYGDEENAWKIAGMIVDRRPLNTTLELVEITDIANKGMKGHSAKRVFQALRIEVNKELEVLERALNSALELLNIGGRLSIITFQSLEDKMVKSFYKTHSQMDYPKNIDIRTFPKPPLKIITRKPVLPSEIELEHNSRSRSAKLRIAEKQS.

Residues 31-33, D50, F76, D97, and Q104 contribute to the S-adenosyl-L-methionine site; that span reads GGH.

The protein belongs to the methyltransferase superfamily. RsmH family.

It localises to the cytoplasm. It catalyses the reaction cytidine(1402) in 16S rRNA + S-adenosyl-L-methionine = N(4)-methylcytidine(1402) in 16S rRNA + S-adenosyl-L-homocysteine + H(+). In terms of biological role, specifically methylates the N4 position of cytidine in position 1402 (C1402) of 16S rRNA. In Acholeplasma laidlawii (strain PG-8A), this protein is Ribosomal RNA small subunit methyltransferase H 1.